The primary structure comprises 896 residues: Translation initiation factor IF-2 (896 aa).

The segment at 49-310 is disordered; it reads LKKEHGDTSG…MQQGFDKSAT (262 aa). The span at 57-66 shows a compositional bias: polar residues; it reads SGETEPTRLT. Basic and acidic residues-rich tracts occupy residues 101–174, 184–240, and 250–263; these read STIE…KDMN, AKKE…KSAD, and REAE…DEKA. The segment covering 284–295 has biased composition (basic residues); the sequence is RNQRGRGGKGKL. The 170-residue stretch at 395–564 folds into the tr-type G domain; it reads GRAPVVTIMG…LLQSEVLELT (170 aa). The segment at 404 to 411 is G1; the sequence is GHVDHGKT. Residue 404-411 participates in GTP binding; that stretch reads GHVDHGKT. The segment at 429–433 is G2; it reads GITQH. The interval 450 to 453 is G3; it reads DTPG. Residues 450-454 and 504-507 contribute to the GTP site; these read DTPGH and NKID. Residues 504–507 are G4; the sequence is NKID. The interval 540–542 is G5; sequence SAK.

The protein belongs to the TRAFAC class translation factor GTPase superfamily. Classic translation factor GTPase family. IF-2 subfamily.

The protein localises to the cytoplasm. In terms of biological role, one of the essential components for the initiation of protein synthesis. Protects formylmethionyl-tRNA from spontaneous hydrolysis and promotes its binding to the 30S ribosomal subunits. Also involved in the hydrolysis of GTP during the formation of the 70S ribosomal complex. The protein is Translation initiation factor IF-2 of Vibrio atlanticus (strain LGP32) (Vibrio splendidus (strain Mel32)).